Reading from the N-terminus, the 179-residue chain is uncharacterized protein (179 aa).

Belongs to the CAPAB/TerDEXZ family.

This is an uncharacterized protein from Synechocystis sp. (strain ATCC 27184 / PCC 6803 / Kazusa).